The chain runs to 244 residues: Tetraspanin-1 (244 aa).

4 helical membrane-spanning segments follow: residues 11 to 31, 67 to 87, 104 to 124, and 198 to 218; these read VLFF…AVGF, LIVV…TAVL, YLVL…AVLV, and ILLV…PILI.

Belongs to the tetraspanin (TM4SF) family.

It localises to the membrane. The polypeptide is Tetraspanin-1 (tsp-1) (Caenorhabditis elegans).